A 965-amino-acid polypeptide reads, in one-letter code: 26S proteasome regulatory subunit rpn2 (965 aa).

PC repeat units follow at residues 385–418 (TATA…PSSS), 424–457 (GAFY…EIVQ), 459–493 (GLLL…VAGS), 494–528 (AAGI…EKII), 530–563 (GLGI…TLRY), 564–599 (AGMF…DVRR), 600–632 (AAVC…PHVR), 634–668 (GSAI…FVRQ), 669–699 (GAMI…FEQV), and 712–744 (GATL…SAIV). 2 disordered regions span residues 826-883 (AKRA…KSET) and 934-965 (NRDA…DDDD). 2 stretches are compositionally biased toward basic and acidic residues: residues 827-856 (KRAE…KEAT) and 874-883 (SKKEEPKSET). Positions 945–965 (EPGEQEASPPEDFEYPFDDDD) are enriched in acidic residues. Residue Ser952 is modified to Phosphoserine.

Belongs to the proteasome subunit S1 family.

Its function is as follows. Acts as a regulatory subunit of the 26S proteasome which is involved in the ATP-dependent degradation of ubiquitinated proteins. This Schizosaccharomyces pombe (strain 972 / ATCC 24843) (Fission yeast) protein is 26S proteasome regulatory subunit rpn2 (rpn2).